The primary structure comprises 62 residues: uncharacterized protein (62 aa).

This is an uncharacterized protein from Sinorhizobium fredii (strain NBRC 101917 / NGR234).